A 286-amino-acid chain; its full sequence is Perivitellin-2 31 kDa subunit (286 aa).

Positions 1-30 (MVKKIHFVMERHASIVAFLLAVLALTESQA) are cleaved as a signal peptide. N-linked (GlcNAc...) asparagine glycosylation is present at Asn101.

This sequence belongs to the tectonin family. In terms of assembly, perivitellin-2 is a dimer of heterodimers held together head-to-tail by non-covalent forces. The heterodimer is composed of the tachylectin subunit (31 kDa) and the MACPF subunit (67 kDa) that are disulfide-linked. PV2 is a very high density lipoprotein (VHDL). It contains 3.75% of lipids. The major lipid classes are free sterols and phospholipids and also have significant quantities of energy-providing triacylglycerides and free fatty acids. As to expression, produced by albumen secretory cells. Found in developing eggs.

The protein resides in the secreted. The protein localises to the target cell membrane. The egg defensive protein perivitellin-2 is a pore-forming two-subunit glycoprotein that affects both the nervous and digestive systems of mammals. In addition, it is a source of both structural and energetic molecules during embryonic development. The tachylectin subunit (31 kDa) binds target membranes while the MACPF subunit (67 kDa) disrupts lipid bilayers forming large pores (inner diameter of about 5.6 nm) altering the plasma membrance conductance. Both in vivo and in vitro, the protein shows wide pH range stability and is resistant to enzymatic proteolysis from gastrointestinal environments. It is cytotoxic to both epithelial and immune cells from the digestive system of mammals. It induces enterocyte death by a lytic mechanism and disrupts enterocyte monolayers in a dose-dependent manner. After oral administration to mice, it binds enterocytes and induces large dose-dependent morphological changes on their small intestine mucosa, reducing the absorptive surface. Additionally, it is detected in the Peyer's patches where it activates lymphoid follicles and triggers apoptosis. The toxin can also traverse the intestinal barrier and induce oral adaptive immunity with evidence of circulating antibody response. The toxin also shows hemagglutination properties thanks to the tachylectin subunit, but has no hemolytic activity. In addition to enterotoxin activity, the toxin also acts as a neurotoxin, since an intraperitoneal injection can induce paralysis of the mice rear limbs, followed by death. This chain is Perivitellin-2 31 kDa subunit, found in Pomacea maculata (Giant applesnail).